The primary structure comprises 216 residues: Kynurenine formamidase (216 aa).

Phe-21 contacts substrate. His-51, His-55, and Asp-57 together coordinate Zn(2+). His-61 acts as the Proton donor/acceptor in catalysis. Residues His-167 and Glu-179 each contribute to the Zn(2+) site.

The protein belongs to the Cyclase 1 superfamily. KynB family. As to quaternary structure, homodimer. Requires Zn(2+) as cofactor.

It catalyses the reaction N-formyl-L-kynurenine + H2O = L-kynurenine + formate + H(+). It functions in the pathway amino-acid degradation; L-tryptophan degradation via kynurenine pathway; L-kynurenine from L-tryptophan: step 2/2. Functionally, catalyzes the hydrolysis of N-formyl-L-kynurenine to L-kynurenine, the second step in the kynurenine pathway of tryptophan degradation. The sequence is that of Kynurenine formamidase from Paracidovorax citrulli (strain AAC00-1) (Acidovorax citrulli).